The sequence spans 356 residues: UDP-N-acetylglucosamine--N-acetylmuramyl-(pentapeptide) pyrophosphoryl-undecaprenol N-acetylglucosamine transferase (356 aa).

Arginine 166, serine 196, and glutamine 290 together coordinate UDP-N-acetyl-alpha-D-glucosamine.

This sequence belongs to the glycosyltransferase 28 family. MurG subfamily.

Its subcellular location is the cell membrane. It carries out the reaction Mur2Ac(oyl-L-Ala-gamma-D-Glu-L-Lys-D-Ala-D-Ala)-di-trans,octa-cis-undecaprenyl diphosphate + UDP-N-acetyl-alpha-D-glucosamine = beta-D-GlcNAc-(1-&gt;4)-Mur2Ac(oyl-L-Ala-gamma-D-Glu-L-Lys-D-Ala-D-Ala)-di-trans,octa-cis-undecaprenyl diphosphate + UDP + H(+). It participates in cell wall biogenesis; peptidoglycan biosynthesis. Its function is as follows. Cell wall formation. Catalyzes the transfer of a GlcNAc subunit on undecaprenyl-pyrophosphoryl-MurNAc-pentapeptide (lipid intermediate I) to form undecaprenyl-pyrophosphoryl-MurNAc-(pentapeptide)GlcNAc (lipid intermediate II). This is UDP-N-acetylglucosamine--N-acetylmuramyl-(pentapeptide) pyrophosphoryl-undecaprenol N-acetylglucosamine transferase from Staphylococcus aureus (strain USA300).